Here is a 311-residue protein sequence, read N- to C-terminus: Malate dehydrogenase (311 aa).

NAD(+)-binding positions include 7 to 13 (GAAGGIG) and Asp34. Arg81 and Arg87 together coordinate substrate. Residues Asn94 and 117-119 (ITN) contribute to the NAD(+) site. Substrate contacts are provided by Asn119 and Arg153. Catalysis depends on His177, which acts as the Proton acceptor. Residue Met227 participates in NAD(+) binding.

Belongs to the LDH/MDH superfamily. MDH type 1 family. In terms of assembly, homodimer.

It catalyses the reaction (S)-malate + NAD(+) = oxaloacetate + NADH + H(+). Functionally, catalyzes the reversible oxidation of malate to oxaloacetate. The chain is Malate dehydrogenase from Haemophilus influenzae (strain 86-028NP).